The primary structure comprises 472 residues: Coronin-6 (472 aa).

WD repeat units lie at residues 23–64 (QAYE…VLPL), 72–111 (KNYP…VWQI), 122–161 (EPII…IWNV), 165–204 (EVLL…IIDP), 210–251 (VAEQ…LWDP), and 256–296 (EPVA…YFEI). The segment at 407–433 (KRNILDVRPPSGPRRSQSASDAPLSQQ) is disordered. Polar residues predominate over residues 420 to 433 (RRSQSASDAPLSQQ). Residues 430-464 (LSQQHTLETLLEEIKALRERVQAQEQRITALENML) are a coiled coil.

The polypeptide is Coronin-6 (CORO6) (Homo sapiens (Human)).